A 197-amino-acid polypeptide reads, in one-letter code: Protein GrpE (197 aa).

The span at 1–27 (MTKQEKAENQEKPTEETVEETPKKETP) shows a compositional bias: basic and acidic residues. The tract at residues 1-50 (MTKQEKAENQEKPTEETVEETPKKETPFEPVMEADEVEETTEAQAPVEEA) is disordered. Residues 32–41 (MEADEVEETT) show a composition bias toward acidic residues.

The protein belongs to the GrpE family. As to quaternary structure, homodimer.

The protein resides in the cytoplasm. Its function is as follows. Participates actively in the response to hyperosmotic and heat shock by preventing the aggregation of stress-denatured proteins, in association with DnaK and GrpE. It is the nucleotide exchange factor for DnaK and may function as a thermosensor. Unfolded proteins bind initially to DnaJ; upon interaction with the DnaJ-bound protein, DnaK hydrolyzes its bound ATP, resulting in the formation of a stable complex. GrpE releases ADP from DnaK; ATP binding to DnaK triggers the release of the substrate protein, thus completing the reaction cycle. Several rounds of ATP-dependent interactions between DnaJ, DnaK and GrpE are required for fully efficient folding. This is Protein GrpE from Latilactobacillus sakei (Lactobacillus sakei).